The chain runs to 143 residues: AP-2 complex subunit sigma (143 aa).

Belongs to the adaptor complexes small subunit family. In terms of assembly, adaptor protein complex 2 (AP-2) is a heterotetramer composed of two large adaptins (alpha-type subunit APL3 and beta-type subunit APL1), a medium chain (mu-type subunit APM4) and a small adaptin (sigma-type subunit APS2).

It localises to the cell membrane. The protein resides in the membrane. The protein localises to the coated pit. Its function is as follows. Component of the adaptor complexes which link clathrin to receptors in coated vesicles. Clathrin-associated protein complexes are believed to interact with the cytoplasmic tails of membrane proteins, leading to their selection and concentration. This is AP-2 complex subunit sigma (APS2) from Gibberella zeae (strain ATCC MYA-4620 / CBS 123657 / FGSC 9075 / NRRL 31084 / PH-1) (Wheat head blight fungus).